The following is a 119-amino-acid chain: Beta-2-microglobulin (119 aa).

The first 20 residues, 1-20 (MARFVAVALLVLLSLSGLET), serve as a signal peptide directing secretion. The region spanning 25–114 (PKIQVYSRHP…VTFSTPKTVK (90 aa)) is the Ig-like C1-type domain. A disulfide bond links C45 and C100.

Belongs to the beta-2-microglobulin family. In terms of assembly, heterodimer of an alpha chain and a beta chain. Beta-2-microglobulin is the beta-chain of major histocompatibility complex class I molecules.

It localises to the secreted. Functionally, component of the class I major histocompatibility complex (MHC). Involved in the presentation of peptide antigens to the immune system. The polypeptide is Beta-2-microglobulin (B2M) (Callicebus personatus personatus (Masked titi)).